Here is a 218-residue protein sequence, read N- to C-terminus: Adenylate kinase (218 aa).

10 to 15 lines the ATP pocket; sequence GAGKGT. An NMP region spans residues 30–59; that stretch reads STGDMLRAAVKEGSELGLKVKEIMNSGGLV. Residues Thr-31, Arg-36, 57–59, 85–88, and Gln-92 contribute to the AMP site; these read GLV and GFPR. Residues 122–159 are LID; the sequence is GRRVHPGSGRVYHVDYNPPKEEGKDDVTGEALIQRDDD. Residues Arg-123 and 132–133 each bind ATP; that span reads VY. Arg-156 and Arg-167 together coordinate AMP. Gly-203 is a binding site for ATP.

Belongs to the adenylate kinase family. As to quaternary structure, monomer.

It is found in the cytoplasm. The catalysed reaction is AMP + ATP = 2 ADP. It functions in the pathway purine metabolism; AMP biosynthesis via salvage pathway; AMP from ADP: step 1/1. Catalyzes the reversible transfer of the terminal phosphate group between ATP and AMP. Plays an important role in cellular energy homeostasis and in adenine nucleotide metabolism. In Chromohalobacter salexigens (strain ATCC BAA-138 / DSM 3043 / CIP 106854 / NCIMB 13768 / 1H11), this protein is Adenylate kinase.